A 460-amino-acid polypeptide reads, in one-letter code: Tol-Pal system protein TolB (460 aa).

Positions 1 to 22 are cleaved as a signal peptide; sequence MTIFQKSFILLIIWNFSLFAFS.

The protein belongs to the TolB family. In terms of assembly, the Tol-Pal system is composed of five core proteins: the inner membrane proteins TolA, TolQ and TolR, the periplasmic protein TolB and the outer membrane protein Pal. They form a network linking the inner and outer membranes and the peptidoglycan layer.

Its subcellular location is the periplasm. Functionally, part of the Tol-Pal system, which plays a role in outer membrane invagination during cell division and is important for maintaining outer membrane integrity. TolB occupies a key intermediary position in the Tol-Pal system because it communicates directly with both membrane-embedded components, Pal in the outer membrane and TolA in the inner membrane. This is Tol-Pal system protein TolB from Blochmanniella floridana.